A 353-amino-acid chain; its full sequence is UPF0283 membrane protein YcjF (353 aa).

Basic and acidic residues predominate over residues 1–19 (MSEPLKPRIDFAEPLKEEP). Residues 1–35 (MSEPLKPRIDFAEPLKEEPTSAFKAQQTFSEAESR) form a disordered region. 3 helical membrane passes run 70-90 (MVMGGLALFGASVVGQGLQWT), 100-120 (VALGGCAAGALIIGAGVGSVV), and 213-233 (ESTLMIAVSPLALVDMAFIAW).

Belongs to the UPF0283 family.

The protein localises to the cell inner membrane. This Salmonella choleraesuis (strain SC-B67) protein is UPF0283 membrane protein YcjF.